The sequence spans 160 residues: Cytochrome b6-f complex subunit 4 (160 aa).

A run of 3 helical transmembrane segments spans residues Leu-36 to Val-56, Leu-95 to Glu-115, and Pro-127 to Ala-147.

The protein belongs to the cytochrome b family. PetD subfamily. In terms of assembly, the 4 large subunits of the cytochrome b6-f complex are cytochrome b6, subunit IV (17 kDa polypeptide, petD), cytochrome f and the Rieske protein, while the 4 small subunits are petG, petL, petM and petN. The complex functions as a dimer.

Its subcellular location is the plastid. The protein resides in the chloroplast thylakoid membrane. Its function is as follows. Component of the cytochrome b6-f complex, which mediates electron transfer between photosystem II (PSII) and photosystem I (PSI), cyclic electron flow around PSI, and state transitions. The protein is Cytochrome b6-f complex subunit 4 of Guillardia theta (Cryptophyte).